A 149-amino-acid polypeptide reads, in one-letter code: Nucleoside diphosphate kinase 1 (149 aa).

Lys9, Phe57, Arg85, Thr91, Arg102, and Asn112 together coordinate ATP. His115 acts as the Pros-phosphohistidine intermediate in catalysis.

The protein belongs to the NDK family. Mg(2+) serves as cofactor. In terms of processing, autophosphorylated.

It catalyses the reaction a 2'-deoxyribonucleoside 5'-diphosphate + ATP = a 2'-deoxyribonucleoside 5'-triphosphate + ADP. The enzyme catalyses a ribonucleoside 5'-diphosphate + ATP = a ribonucleoside 5'-triphosphate + ADP. Major role in the synthesis of nucleoside triphosphates other than ATP. The ATP gamma phosphate is transferred to the NDP beta phosphate via a ping-pong mechanism, using a phosphorylated active-site intermediate. Also exhibits a kinase-like activity towards histone H1. This chain is Nucleoside diphosphate kinase 1 (NDPK1), found in Saccharum officinarum (Sugarcane).